We begin with the raw amino-acid sequence, 465 residues long: Pancreatic triacylglycerol lipase (465 aa).

A signal peptide spans 1-16 (MLPLWTLSLLLGAVAG). Intrachain disulfides connect C20-C26 and C107-C118. The active-site Nucleophile is S169. A glycan (N-linked (GlcNAc...) asparagine) is linked at N183. The Charge relay system role is filled by D193. Positions 204, 207, 209, and 212 each coordinate Ca(2+). An intrachain disulfide couples C254 to C278. The active-site Charge relay system is H280. 3 cysteine pairs are disulfide-bonded: C302–C313, C316–C321, and C449–C465. The PLAT domain maps to 355 to 465 (WRYKVSVTLS…EEVLLTLTPC (111 aa)).

Belongs to the AB hydrolase superfamily. Lipase family. Forms a 1:1 stoichiometric complex with (pro)colipase/CLPS.

Its subcellular location is the secreted. It carries out the reaction a triacylglycerol + H2O = a diacylglycerol + a fatty acid + H(+). The catalysed reaction is 1,2,3-tributanoylglycerol + H2O = dibutanoylglycerol + butanoate + H(+). The enzyme catalyses 1,2,3-tri-(9Z-octadecenoyl)-glycerol + H2O = di-(9Z)-octadecenoylglycerol + (9Z)-octadecenoate + H(+). It catalyses the reaction all-trans-retinyl hexadecanoate + H2O = all-trans-retinol + hexadecanoate + H(+). It carries out the reaction 1,2-di-(9Z-octadecenoyl)-glycerol + H2O = (9Z-octadecenoyl)-glycerol + (9Z)-octadecenoate + H(+). Inhibited by bile salts, is reactivated by (pro)colipase/CLPS. Functionally, plays an important role in fat metabolism. It preferentially splits the esters of long-chain fatty acids at positions 1 and 3, producing mainly 2-monoacylglycerol and free fatty acids, and shows considerably higher activity against insoluble emulsified substrates than against soluble ones. The sequence is that of Pancreatic triacylglycerol lipase from Homo sapiens (Human).